The primary structure comprises 403 residues: Acetylornithine aminotransferase (403 aa).

Residues 107-108 (GA) and Phe-140 each bind pyridoxal 5'-phosphate. Arg-143 contributes to the N(2)-acetyl-L-ornithine binding site. Residue 225–228 (DEVQ) coordinates pyridoxal 5'-phosphate. Residue Lys-254 is modified to N6-(pyridoxal phosphate)lysine. Ser-282 is a binding site for N(2)-acetyl-L-ornithine. Position 283 (Thr-283) interacts with pyridoxal 5'-phosphate.

This sequence belongs to the class-III pyridoxal-phosphate-dependent aminotransferase family. ArgD subfamily. As to quaternary structure, homodimer. The cofactor is pyridoxal 5'-phosphate.

The protein resides in the cytoplasm. The enzyme catalyses N(2)-acetyl-L-ornithine + 2-oxoglutarate = N-acetyl-L-glutamate 5-semialdehyde + L-glutamate. Its pathway is amino-acid biosynthesis; L-arginine biosynthesis; N(2)-acetyl-L-ornithine from L-glutamate: step 4/4. This Vibrio vulnificus (strain YJ016) protein is Acetylornithine aminotransferase.